The sequence spans 605 residues: Glucose oxidase (605 aa).

The N-terminal stretch at 1–16 (MQTLLVSSLVVSLAAA) is a signal peptide. Positions 51 and 52 each coordinate FAD. Asn-65 carries N-linked (GlcNAc...) asparagine glycosylation. An FAD-binding site is contributed by Glu-72. Residue Asn-111 is glycosylated (N-linked (GlcNAc...) asparagine). Ser-125, Asn-129, Gly-130, and Thr-132 together coordinate FAD. N-linked (GlcNAc...) asparagine glycans are attached at residues Asn-183 and Asn-190. A disulfide bond links Cys-186 and Cys-228. FAD is bound at residue Val-272. 4 N-linked (GlcNAc...) asparagine glycosylation sites follow: Asn-280, Asn-377, Asn-410, and Asn-495. Residue His-538 is the Proton acceptor of the active site. O2 is bound by residues Arg-559 and Val-560. Positions 571 and 583 each coordinate FAD.

The protein belongs to the GMC oxidoreductase family. As to quaternary structure, homodimer. FAD is required as a cofactor. The N-linked sugar chains of the glucose oxidase contributed to the high solubility of the enzyme in water.

Its subcellular location is the secreted. It localises to the cell wall. The protein localises to the cytoplasm. It is found in the extracellular space. The protein resides in the extracellular matrix. The enzyme catalyses beta-D-glucose + O2 = D-glucono-1,5-lactone + H2O2. Glucose oxidase catalyzes the oxidation of beta-D-glucose to D-glucono-delta-lactone and hydrogen peroxide in the presence of molecular oxygen. D-glucono-delta-lactone is sequentially hydrolyzed by lactonase to D-gluconic acid, and the resulting hydrogen peroxide is hydrolyzed by catalase to oxygen and water. The activity shows high specificity to beta-D-glucose, with very low to no activity towards L-glucose, 2-deoxy-D-glucose, 3-deoxy-D-glucose, 4-deoxy-D-glucose, 5-deoxy-D-glucose, 6-deoxy-D-glucose, 3-O-methyl-D-glucose, 4-O-methyl-D-glucose, 6-O-methyl-D-glucose, 4,6-O-benzylidene-D-glucose, 5-thio-5-deoxy-D-glucose, D-mannose, D-allose, D-galactose, D-fructose, D-arabinose, D-xylose, trehalose, melibiose, L-mannomethylose, lactose, sucrose or 1,5-anhydro-D-glucitol. This Aspergillus niger protein is Glucose oxidase.